The chain runs to 379 residues: Chaperone protein DnaJ (379 aa).

One can recognise a J domain in the interval 5 to 70; sequence DYYEILGLDK…QKKAQYDQFG (66 aa). The segment at 135 to 217 adopts a CR-type zinc-finger fold; the sequence is GVEKEISVTR…CRGKGIVRKH (83 aa). Residues Cys-148, Cys-151, Cys-165, Cys-168, Cys-191, Cys-194, Cys-205, and Cys-208 each contribute to the Zn(2+) site. 4 CXXCXGXG motif repeats span residues 148–155, 165–172, 191–198, and 205–212; these read CETCNGTG, CDKCNGTG, CDKCGGRG, and CEECRGKG.

Belongs to the DnaJ family. As to quaternary structure, homodimer. Requires Zn(2+) as cofactor.

It localises to the cytoplasm. In terms of biological role, participates actively in the response to hyperosmotic and heat shock by preventing the aggregation of stress-denatured proteins and by disaggregating proteins, also in an autonomous, DnaK-independent fashion. Unfolded proteins bind initially to DnaJ; upon interaction with the DnaJ-bound protein, DnaK hydrolyzes its bound ATP, resulting in the formation of a stable complex. GrpE releases ADP from DnaK; ATP binding to DnaK triggers the release of the substrate protein, thus completing the reaction cycle. Several rounds of ATP-dependent interactions between DnaJ, DnaK and GrpE are required for fully efficient folding. Also involved, together with DnaK and GrpE, in the DNA replication of plasmids through activation of initiation proteins. The sequence is that of Chaperone protein DnaJ from Clostridium kluyveri (strain ATCC 8527 / DSM 555 / NBRC 12016 / NCIMB 10680 / K1).